Consider the following 311-residue polypeptide: Natural killer cell receptor 2B4 (311 aa).

An N-terminal signal peptide occupies residues 1-19; that stretch reads MLQQTVLLSLFLLLRAHQG. Residues 20 to 223 are Extracellular-facing; sequence QDCADSSEEV…CQSVPSKFNY (204 aa). A disulfide bridge links Cys22 with Cys118. 2 Ig-like domains span residues 22 to 128 and 131 to 215; these read CADS…LIFD and ETPH…QSCQ. Residues Asn101, Asn144, Asn160, Asn183, Asn196, and Asn205 are each glycosylated (N-linked (GlcNAc...) asparagine). An intrachain disulfide couples Cys153 to Cys195. Residues 224 to 247 traverse the membrane as a helical segment; it reads LPFMVSIGILVKFFHGAIDCFCVW. Residues 248–311 are Cytoplasmic-facing; sequence NRKRKQSQSI…RRLFQFINRS (64 aa). A disordered region spans residues 275-301; the sequence is RDQRGHFRASGSSSDVRGDERGQRESD. Positions 290–301 are enriched in basic and acidic residues; that stretch reads VRGDERGQRESD.

In terms of assembly, interacts with CD48. Interacts (via phosphorylated ITSM 1-4) with SH2D1A (via SH2 domain); SH2D1A probably mediates association with FYN. Interacts (via phosphorylated ITSM 3) with PTPN11/SHP-2, INPP5D/SHIP1, PTPN6/SHP-1 and CSK; binding of SH2D1A/SAP prevents association with PTPN11, PTPN6 and CSK; conflictingly a similar association has been described for phosphorylated ITSM 1 also including GRB2 and PLCG1. Interacts weakly (via phosphorylated ITSM 2) with PTPN11/SHP-2 and CSK. Interacts with SH2D1B. Interacts with PIK3R1; PI3K recruits SH2D1A. Interacts with MHC class I proteins; the interaction is proposed to prevent self-killing of NK cells. Post-translationally, N-linked glycosylation is essential for the binding to its ligand CD48. Also O-glycosylated, in contrast, O-linked sialylation has a negative impact on ligand binding. Phosphorylated by FYN and CSK on tyrosine residues following activation. Coligation with inhibitory receptors such as KIR2DL1 inhibits phosphorylation upon contact of NK cells with sensitive target cells.

It localises to the membrane. The protein resides in the cell membrane. The protein localises to the membrane raft. Heterophilic receptor of the signaling lymphocytic activation molecule (SLAM) family; its ligand is CD48. SLAM receptors triggered by homo- or heterotypic cell-cell interactions are modulating the activation and differentiation of a wide variety of immune cells and thus are involved in the regulation and interconnection of both innate and adaptive immune response. Activities are controlled by presence or absence of small cytoplasmic adapter proteins, SH2D1A/SAP and/or SH2D1B/EAT-2. Acts as activating natural killer (NK) cell receptor. Activating function implicates association with SH2D1A and FYN. Downstreaming signaling involves predominantly VAV1, and, to a lesser degree, INPP5D/SHIP1 and CBL. Signal attenuation in the absence of SH2D1A is proposed to be dependent on INPP5D and to a lesser extent PTPN6/SHP-1 and PTPN11/SHP-2. Stimulates NK cell cytotoxicity, production of IFN-gamma and granule exocytosis. Optimal expansion and activation of NK cells seems to be dependent on the engagement of CD244 with CD48 expressed on neighboring NK cells. Acts as costimulator in NK activation by enhancing signals by other NK receptors such as NCR3 and NCR1. At early stages of NK cell differentiation may function as an inhibitory receptor possibly ensuring the self-tolerance of developing NK cells. Involved in the regulation of CD8(+) T-cell proliferation; expression on activated T-cells and binding to CD48 provides costimulatory-like function for neighboring T-cells. Inhibits inflammatory responses in dendritic cells (DCs). The polypeptide is Natural killer cell receptor 2B4 (Cd244) (Rattus norvegicus (Rat)).